Reading from the N-terminus, the 215-residue chain is UPF0056 membrane protein bbp_248 (215 aa).

6 consecutive transmembrane segments (helical) span residues 10 to 32 (IYISFFFSLFALVNPIGMIPIFT), 52 to 74 (FSVAIILSISLIFGSFILNLFGI), 78 to 100 (SFRISGGILVMIIAISMINGNFI), 119 to 141 (ISIVPLAMPLIAGPGAISSTIVW), 151 to 169 (IFGCMVTIMLFSCFCWTLF), and 190 to 207 (IMGLLLMSLGIEFILAGL).

Belongs to the UPF0056 (MarC) family.

It is found in the cell membrane. The sequence is that of UPF0056 membrane protein bbp_248 from Buchnera aphidicola subsp. Baizongia pistaciae (strain Bp).